The sequence spans 262 residues: MFLFSRKTKTPISTYSDSYRAPTSIKEVYKDPPLCAWEANKFLTPGLTHTMEQHVDPEALQKMAKCAVQDYTYRGPISGHPYLPEKYWLSQEEADKCSPNYLGSNRYNTWRMEPYNSSCCNKYTTYLPRLPKEAGMETAVRGMPLECPPKPERLNAYEREVMVNMLNSLSRNQQLPRITPRCGCVDPLPGRLPFHGYESACSGRHYCLRGMDYYASGAPCTDRRLRPWCRELPTLCTSLRAPARNAVCCYNSPAVILPISEP.

Belongs to the SPMIP6 family. Microtubule inner protein component of sperm flagellar doublet microtubules. Interacts with alpha-tubulin.

The protein localises to the cytoplasm. The protein resides in the cytoskeleton. It localises to the nucleus. Its subcellular location is the mitochondrion. It is found in the flagellum axoneme. Its function is as follows. May participate in intramanchette transport and midpiece formation of the sperm tail. May play a potential role in somatic cell proliferation. This chain is Sperm microtubule inner protein 6 (SPMIP6), found in Macaca fascicularis (Crab-eating macaque).